The primary structure comprises 956 residues: MPRVSAPLVLLPAWLVMVACSPHSLRIAAILDDPMECSRGERLSITLAKNRINRAPERLGKAKVEVDIFELLRDSEYETAETMCQILPKGVVAVLGPSSSPASSSIISNICGEKEVPHFKVAPEEFVKFQFQRFTTLNLHPSNTDISVAVAGILNFFNCTTACLICAKAECLLNLEKLLRQFLISKDTLSVRMLDDTRDPTPLLKEIRDDKTATIIIHANASMSHTILLKAAELGMVSAYYTYIFTNLEFSLQRMDSLVDDRVNILGFSIFNQSHAFFQEFAQSLNQSWQENCDHVPFTGPALSSALLFDAVYAVVTAVQELNRSQEIGVKPLSCGSAQIWQHGTSLMNYLRMVELEGLTGHIEFNSKGQRSNYALKILQFTRNGFRQIGQWHVAEGLSMDSHLYASNISDTLFNTTLVVTTILENPYLMLKGNHQEMEGNDRYEGFCVDMLKELAEILRFNYKIRLVGDGVYGVPEANGTWTGMVGELIARKADLAVAGLTITAEREKVIDFSKPFMTLGISILYRVHMGRKPGYFSFLDPFSPGVWLFMLLAYLAVSCVLFLVARLTPYEWYSPHPCAQGRCNLLVNQYSLGNSLWFPVGGFMQQGSTIAPRALSTRCVSGVWWAFTLIIISSYTANLAAFLTVQRMDVPIESVDDLADQTAIEYGTIHGGSSMTFFQNSRYQTYQRMWNYMYSKQPSVFVKSTEEGIARVLNSNYAFLLESTMNEYYRQRNCNLTQIGGLLDTKGYGIGMPVGSVFRDEFDLAILQLQENNRLEILKRKWWEGGKCPKEEDHRAKGLGMENIGGIFVVLICGLIVAIFMAMLEFLWTLRHSEATEVSVCQEMVTELRSIILCQDSIHPRRRRAAVPPPRPPIPEERRPRGTATLSNGKLCGAGEPDQLAQRLAQEAALVARGCTHIRVCPECRRFQGLRARPSPARSEESLEWEKTTNSSEPE.

An N-terminal signal peptide occupies residues methionine 1 to cysteine 20. The Extracellular portion of the chain corresponds to serine 21–proline 545. Asparagine 158, asparagine 220, asparagine 272, asparagine 286, asparagine 323, asparagine 408, asparagine 415, and asparagine 479 each carry an N-linked (GlcNAc...) asparagine glycan. L-glutamate contacts are provided by glycine 500, threonine 502, and arginine 507. Residues glycine 546–alanine 566 form a helical membrane-spanning segment. Residues arginine 567–glycine 623 are Cytoplasmic-facing. A helical membrane pass occupies residues valine 624–leucine 644. The Extracellular portion of the chain corresponds to threonine 645–asparagine 804. Residues serine 674, serine 675, and glutamate 723 each coordinate L-glutamate. A glycan (N-linked (GlcNAc...) asparagine) is linked at asparagine 736. Residues isoleucine 805 to leucine 825 form a helical membrane-spanning segment. At glutamate 826–glutamate 956 the chain is on the cytoplasmic side. Disordered stretches follow at residues arginine 863–asparagine 889 and leucine 931–glutamate 956. Residues arginine 939–lysine 948 are compositionally biased toward basic and acidic residues.

The protein belongs to the glutamate-gated ion channel (TC 1.A.10.1) family. GRIK4 subfamily. Homodimer. Can form functional heteromeric receptors with GRIK1, GRIK2 and GRIK3.

It is found in the cell membrane. The protein localises to the postsynaptic cell membrane. Its subcellular location is the presynaptic cell membrane. Ionotropic glutamate receptor that functions as a cation-permeable ligand-gated ion channel. Cannot form functional channels on its own. Shows channel activity only in heteromeric assembly with GRIK1, GRIK2 and GRIK3 subunits. In Homo sapiens (Human), this protein is Glutamate receptor ionotropic, kainate 4 (GRIK4).